A 90-amino-acid polypeptide reads, in one-letter code: Lectin-1 (90 aa).

Gln1 carries the pyrrolidone carboxylic acid modification. Cysteines 46 and 71 form a disulfide.

The N-terminus is blocked. Post-translationally, contains seven disulfide bonds. In terms of processing, proteolytically cleaved. Major mature form may consist of cleaved, disulfide-bonded N-terminal and C-terminal chains.

Functionally, lectin with specificity for complex N-linked glycans and O-linked glycans. Has hemagglutinating activity towards rabbit erythrocytes. This chain is Lectin-1, found in Hypnea musciformis (Red alga).